We begin with the raw amino-acid sequence, 300 residues long: ClpXP adapter protein SpxH (300 aa).

The protein belongs to the SpxH family. In terms of assembly, interacts with Spx.

The protein resides in the cytoplasm. Functionally, adapter protein required for efficient degradation of Spx by ClpXP under non-stress conditions. Interaction with Spx stabilizes Spx and exposes the C-terminus of Spx for recognition and proteolysis by ClpXP. This is ClpXP adapter protein SpxH from Shouchella clausii (strain KSM-K16) (Alkalihalobacillus clausii).